Reading from the N-terminus, the 440-residue chain is NADH-quinone oxidoreductase subunit D 1 (440 aa).

It belongs to the complex I 49 kDa subunit family. As to quaternary structure, NDH-1 is composed of 14 different subunits. Subunits NuoB, C, D, E, F, and G constitute the peripheral sector of the complex.

It localises to the cell inner membrane. The catalysed reaction is a quinone + NADH + 5 H(+)(in) = a quinol + NAD(+) + 4 H(+)(out). Functionally, NDH-1 shuttles electrons from NADH, via FMN and iron-sulfur (Fe-S) centers, to quinones in the respiratory chain. The immediate electron acceptor for the enzyme in this species is believed to be a menaquinone. Couples the redox reaction to proton translocation (for every two electrons transferred, four hydrogen ions are translocated across the cytoplasmic membrane), and thus conserves the redox energy in a proton gradient. The sequence is that of NADH-quinone oxidoreductase subunit D 1 from Chloroherpeton thalassium (strain ATCC 35110 / GB-78).